The primary structure comprises 597 residues: Putative heat shock protein HSP 90-beta-3 (597 aa).

Asparagine 46, aspartate 88, and lysine 107 together coordinate ATP. Positions aspartate 201–lysine 241 are disordered. The segment covering isoleucine 204–aspartate 223 has biased composition (acidic residues). The segment covering glutamate 224–glycine 233 has biased composition (basic and acidic residues). Arginine 334 contacts ATP. The stretch at leucine 414–lysine 446 forms a coiled coil. Residues aspartate 564–proline 578 show a composition bias toward acidic residues. The disordered stretch occupies residues aspartate 564–aspartate 597. The TPR repeat-binding signature appears at methionine 593 to aspartate 597.

The protein belongs to the heat shock protein 90 family. As to quaternary structure, homodimer.

Its subcellular location is the cytoplasm. In terms of biological role, putative molecular chaperone that may promote the maturation, structural maintenance and proper regulation of specific target proteins. This is Putative heat shock protein HSP 90-beta-3 (HSP90AB3P) from Homo sapiens (Human).